The following is an 868-amino-acid chain: DNA topoisomerase 1 (868 aa).

A Toprim domain is found at 3–148 (KSLVIVESPA…RFSRVVFNEI (146 aa)). Mg(2+) contacts are provided by Glu9 and Asp117. In terms of domain architecture, Topo IA-type catalytic spans 164-581 (NMDRVNAQQT…QFFKDFSSQL (418 aa)). An interaction with DNA region spans residues 198–203 (SAGRVQ). The O-(5'-phospho-DNA)-tyrosine intermediate role is filled by Tyr325. 3 C4-type zinc fingers span residues 605–636 (CPTC…KERC), 667–694 (CTKC…NPNC), and 716–739 (CDKC…CTNC).

It belongs to the type IA topoisomerase family. Monomer. Mg(2+) serves as cofactor.

The catalysed reaction is ATP-independent breakage of single-stranded DNA, followed by passage and rejoining.. Its function is as follows. Releases the supercoiling and torsional tension of DNA, which is introduced during the DNA replication and transcription, by transiently cleaving and rejoining one strand of the DNA duplex. Introduces a single-strand break via transesterification at a target site in duplex DNA. The scissile phosphodiester is attacked by the catalytic tyrosine of the enzyme, resulting in the formation of a DNA-(5'-phosphotyrosyl)-enzyme intermediate and the expulsion of a 3'-OH DNA strand. The free DNA strand then undergoes passage around the unbroken strand, thus removing DNA supercoils. Finally, in the religation step, the DNA 3'-OH attacks the covalent intermediate to expel the active-site tyrosine and restore the DNA phosphodiester backbone. The polypeptide is DNA topoisomerase 1 (Haemophilus influenzae (strain ATCC 51907 / DSM 11121 / KW20 / Rd)).